A 137-amino-acid polypeptide reads, in one-letter code: MLQPKRTKFRKQQKLRNRGLAHRGNKVSFGEFGLQATSRGRITARQIEAGRRAISRHIKRGGKIWIRIFPDKPITQKPLEVRMGKGKGSVEYWVAQIQPGRVLYEITGVKEELAREAFARAAAKMPVQTTFVEKQVM.

It belongs to the universal ribosomal protein uL16 family. As to quaternary structure, part of the 50S ribosomal subunit.

Functionally, binds 23S rRNA and is also seen to make contacts with the A and possibly P site tRNAs. The chain is Large ribosomal subunit protein uL16 from Francisella tularensis subsp. tularensis (strain FSC 198).